We begin with the raw amino-acid sequence, 452 residues long: Bifunctional protein GlmU (452 aa).

Positions 1-226 (MNFSAVILAA…PIEVEGVNDR (226 aa)) are pyrophosphorylase. UDP-N-acetyl-alpha-D-glucosamine-binding positions include 8–11 (LAAG), Lys22, Gln73, 78–79 (GT), 100–102 (YGD), Gly137, Glu151, Asn166, and Asn224. Asp102 is a binding site for Mg(2+). Residue Asn224 coordinates Mg(2+). Residues 227–247 (AQLARLERAYQAAQAQKLLEQ) are linker. The tract at residues 248-452 (GVMLRDPSRF…IANWQRPTKK (205 aa)) is N-acetyltransferase. The UDP-N-acetyl-alpha-D-glucosamine site is built by Arg330 and Lys348. His360 serves as the catalytic Proton acceptor. Tyr363 and Asn374 together coordinate UDP-N-acetyl-alpha-D-glucosamine. Residues Ala377, 383–384 (NY), Ser402, Ala420, and Arg437 contribute to the acetyl-CoA site.

This sequence in the N-terminal section; belongs to the N-acetylglucosamine-1-phosphate uridyltransferase family. It in the C-terminal section; belongs to the transferase hexapeptide repeat family. As to quaternary structure, homotrimer. Mg(2+) serves as cofactor.

It is found in the cytoplasm. The enzyme catalyses alpha-D-glucosamine 1-phosphate + acetyl-CoA = N-acetyl-alpha-D-glucosamine 1-phosphate + CoA + H(+). It catalyses the reaction N-acetyl-alpha-D-glucosamine 1-phosphate + UTP + H(+) = UDP-N-acetyl-alpha-D-glucosamine + diphosphate. It functions in the pathway nucleotide-sugar biosynthesis; UDP-N-acetyl-alpha-D-glucosamine biosynthesis; N-acetyl-alpha-D-glucosamine 1-phosphate from alpha-D-glucosamine 6-phosphate (route II): step 2/2. The protein operates within nucleotide-sugar biosynthesis; UDP-N-acetyl-alpha-D-glucosamine biosynthesis; UDP-N-acetyl-alpha-D-glucosamine from N-acetyl-alpha-D-glucosamine 1-phosphate: step 1/1. It participates in bacterial outer membrane biogenesis; LPS lipid A biosynthesis. In terms of biological role, catalyzes the last two sequential reactions in the de novo biosynthetic pathway for UDP-N-acetylglucosamine (UDP-GlcNAc). The C-terminal domain catalyzes the transfer of acetyl group from acetyl coenzyme A to glucosamine-1-phosphate (GlcN-1-P) to produce N-acetylglucosamine-1-phosphate (GlcNAc-1-P), which is converted into UDP-GlcNAc by the transfer of uridine 5-monophosphate (from uridine 5-triphosphate), a reaction catalyzed by the N-terminal domain. The chain is Bifunctional protein GlmU from Aliivibrio fischeri (strain MJ11) (Vibrio fischeri).